A 265-amino-acid polypeptide reads, in one-letter code: UPF0354 protein ABC2771 (265 aa).

It belongs to the UPF0354 family.

This chain is UPF0354 protein ABC2771, found in Shouchella clausii (strain KSM-K16) (Alkalihalobacillus clausii).